The sequence spans 136 residues: MTLNLSVLTPNRIIWDSEVKEIILVTNSGQIGVLPDHAPIATAVDIGILKIRLTPNDGWLTMALMGGFARIGNNEVTILVNDAEKASDIDPQEAQQTLEIAEANLRKAQGKRQTIEANLALRRARTRVEAINGVPS.

Belongs to the ATPase epsilon chain family. In terms of assembly, F-type ATPases have 2 components, CF(1) - the catalytic core - and CF(0) - the membrane proton channel. CF(1) has five subunits: alpha(3), beta(3), gamma(1), delta(1), epsilon(1). CF(0) has three main subunits: a, b and c.

Its subcellular location is the plastid. The protein resides in the chloroplast thylakoid membrane. Its function is as follows. Produces ATP from ADP in the presence of a proton gradient across the membrane. The polypeptide is ATP synthase epsilon chain, chloroplastic (Cucumis sativus (Cucumber)).